A 142-amino-acid polypeptide reads, in one-letter code: Gonadotropin subunit beta-2 (142 aa).

Residues 1 to 23 (MLGLHVGTLISLFLCILLEPIEG) form the signal peptide. 6 cysteine pairs are disulfide-bonded: Cys29/Cys77, Cys43/Cys92, Cys46/Cys130, Cys54/Cys108, Cys58/Cys110, and Cys113/Cys120. Asn33 is a glycosylation site (N-linked (GlcNAc...) asparagine).

It belongs to the glycoprotein hormones subunit beta family. Heterodimer of an alpha and a beta chain.

Its subcellular location is the secreted. Its function is as follows. Involved in gametogenesis and steroidogenesis. The polypeptide is Gonadotropin subunit beta-2 (cgbb) (Oncorhynchus tshawytscha (Chinook salmon)).